Reading from the N-terminus, the 95-residue chain is MEHLYIVSYDIRNQRRWRRLFKTMHGFGCWLQLSVFQCRLDRIRIIKMEAAINEIVNHAEDHVLILDLGPAENVKPKVSSIGKTFDPILRQAVIV.

Asp-10 provides a ligand contact to Mg(2+).

This sequence belongs to the CRISPR-associated endoribonuclease Cas2 protein family. As to quaternary structure, homodimer, forms a heterotetramer with a Cas1 homodimer. The cofactor is Mg(2+).

Functionally, CRISPR (clustered regularly interspaced short palindromic repeat), is an adaptive immune system that provides protection against mobile genetic elements (viruses, transposable elements and conjugative plasmids). CRISPR clusters contain sequences complementary to antecedent mobile elements and target invading nucleic acids. CRISPR clusters are transcribed and processed into CRISPR RNA (crRNA). Functions as a ssRNA-specific endoribonuclease. Involved in the integration of spacer DNA into the CRISPR cassette. The sequence is that of CRISPR-associated endoribonuclease Cas2 from Geobacter sulfurreducens (strain ATCC 51573 / DSM 12127 / PCA).